The primary structure comprises 283 residues: MLIIETLPLLRQQIRRLRMEGKRVALVPTMGNLHDGHMKLVDEAKARADVVVVSIFVNPMQFDRPEDLARYPRTLQEDCEKLNKRKVDLVFAPSVKEIYPNGTETHTYVDVPGLSTMLEGASRPGHFRGVSTIVSKLFNLVQPDIACFGEKDFQQLALIRKMVADMGFDIEIVGVPIMRAKDGLALSSRNGYLTAEQRKIAPGLYKVLSSIADKLQAGERDLDEIIAIAGQELNEKGFRSDDIQIRDADTLLEVSENSKRAVILVAAWLGDARLIDNKLVELA.

30–37 provides a ligand contact to ATP; it reads MGNLHDGH. The active-site Proton donor is the His-37. Gln-61 is a binding site for (R)-pantoate. Gln-61 contributes to the beta-alanine binding site. Residue 149–152 coordinates ATP; sequence GEKD. Position 155 (Gln-155) interacts with (R)-pantoate. 186–189 lines the ATP pocket; the sequence is LSSR.

It belongs to the pantothenate synthetase family. Homodimer.

Its subcellular location is the cytoplasm. It catalyses the reaction (R)-pantoate + beta-alanine + ATP = (R)-pantothenate + AMP + diphosphate + H(+). Its pathway is cofactor biosynthesis; (R)-pantothenate biosynthesis; (R)-pantothenate from (R)-pantoate and beta-alanine: step 1/1. Functionally, catalyzes the condensation of pantoate with beta-alanine in an ATP-dependent reaction via a pantoyl-adenylate intermediate. This is Pantothenate synthetase from Escherichia coli O127:H6 (strain E2348/69 / EPEC).